The following is a 487-amino-acid chain: Chromosomal replication initiator protein DnaA (487 aa).

The tract at residues 1 to 71 (MMHDALFERF…TSLVQSEDPD (71 aa)) is domain I, interacts with DnaA modulators. The interval 71-141 (DVLKVEILVR…QGGSGPLFGS (71 aa)) is domain II. The domain III, AAA+ region stretch occupies residues 142–364 (PLDTRFTFDT…GAFNQLMFRR (223 aa)). Residues Gly-188, Gly-190, Lys-191, and Thr-192 each coordinate ATP. The segment at 365–487 (SFEPNLSVDR…LKRLINENNA (123 aa)) is domain IV, binds dsDNA.

It belongs to the DnaA family. In terms of assembly, oligomerizes as a right-handed, spiral filament on DNA at oriC.

The protein localises to the cytoplasm. Plays an essential role in the initiation and regulation of chromosomal replication. ATP-DnaA binds to the origin of replication (oriC) to initiate formation of the DNA replication initiation complex once per cell cycle. Binds the DnaA box (a 9 base pair repeat at the origin) and separates the double-stranded (ds)DNA. Forms a right-handed helical filament on oriC DNA; dsDNA binds to the exterior of the filament while single-stranded (ss)DNA is stabiized in the filament's interior. The ATP-DnaA-oriC complex binds and stabilizes one strand of the AT-rich DNA unwinding element (DUE), permitting loading of DNA polymerase. After initiation quickly degrades to an ADP-DnaA complex that is not apt for DNA replication. Binds acidic phospholipids. In Agrobacterium fabrum (strain C58 / ATCC 33970) (Agrobacterium tumefaciens (strain C58)), this protein is Chromosomal replication initiator protein DnaA.